A 346-amino-acid chain; its full sequence is Peripherin-2 (346 aa).

The Cytoplasmic segment spans residues 1–24; it reads MALMKTKFNLKRRVKLAQGLWLMN. Residues 25-43 traverse the membrane as a helical segment; the sequence is WCCVLAGIALFSMGVFLKI. Topologically, residues 44 to 61 are lumenal; that stretch reads ELRKRSEVMDNDESHFVP. Residues 62–80 form a helical membrane-spanning segment; the sequence is NSLILMGSLACALNAFPGK. Residues 81–99 are Cytoplasmic-facing; it reads ICYDSLDPTKFPRWKPMLK. The chain crosses the membrane as a helical span at residues 100–123; that stretch reads PYLIICLIFNIFIFFTGVVCFLTR. The Lumenal segment spans residues 124-264; the sequence is GSLESTLAHG…LNYYTSMMSS (141 aa). Asparagine 229 is a glycosylation site (N-linked (GlcNAc...) asparagine). Residues 265-290 form a helical membrane-spanning segment; it reads MGGMVFLVWIMEMAVMIGLRFLHTCL. Over 291-346 the chain is Cytoplasmic; that stretch reads ETIANPEDPECESEGWILEKSLKDTIKSSWELVKSMGKLNKVETAGGEEAGVATVS.

Belongs to the PRPH2/ROM1 family. Homodimer; disulfide-linked. As to expression, found in both rod and cone photoreceptors. Specifically in the rims and incisures of rod and cone outer segment disks.

The protein localises to the membrane. Its function is as follows. May be involved in the morphogenesis of retina outer segment disks and the development and maintenance of the retina ultrastructure. The polypeptide is Peripherin-2 (prph2) (Xenopus laevis (African clawed frog)).